The sequence spans 182 residues: Peptidyl-prolyl cis-trans isomerase H (182 aa).

A PPIase cyclophilin-type domain is found at 15–181 (FFDITLGGEP…LDVVIAQCGE (167 aa)).

It belongs to the cyclophilin-type PPIase family. PPIase H subfamily.

The protein resides in the nucleus. The enzyme catalyses [protein]-peptidylproline (omega=180) = [protein]-peptidylproline (omega=0). Its function is as follows. PPIases accelerate the folding of proteins. It catalyzes the cis-trans isomerization of proline imidic peptide bonds in oligopeptides. The sequence is that of Peptidyl-prolyl cis-trans isomerase H (cyp-3) from Neurospora crassa (strain ATCC 24698 / 74-OR23-1A / CBS 708.71 / DSM 1257 / FGSC 987).